The chain runs to 613 residues: Dihydroxy-acid dehydratase 3 (613 aa).

Residue Asp81 coordinates Mg(2+). Residue Cys122 participates in [2Fe-2S] cluster binding. The Mg(2+) site is built by Asp123 and Lys124. Position 124 is an N6-carboxylysine (Lys124). Cys197 serves as a coordination point for [2Fe-2S] cluster. Glu493 is a Mg(2+) binding site. Ser519 acts as the Proton acceptor in catalysis.

This sequence belongs to the IlvD/Edd family. As to quaternary structure, homodimer. It depends on [2Fe-2S] cluster as a cofactor. Mg(2+) serves as cofactor.

It carries out the reaction (2R)-2,3-dihydroxy-3-methylbutanoate = 3-methyl-2-oxobutanoate + H2O. The catalysed reaction is (2R,3R)-2,3-dihydroxy-3-methylpentanoate = (S)-3-methyl-2-oxopentanoate + H2O. Its pathway is amino-acid biosynthesis; L-isoleucine biosynthesis; L-isoleucine from 2-oxobutanoate: step 3/4. It functions in the pathway amino-acid biosynthesis; L-valine biosynthesis; L-valine from pyruvate: step 3/4. Functions in the biosynthesis of branched-chain amino acids. Catalyzes the dehydration of (2R,3R)-2,3-dihydroxy-3-methylpentanoate (2,3-dihydroxy-3-methylvalerate) into 2-oxo-3-methylpentanoate (2-oxo-3-methylvalerate) and of (2R)-2,3-dihydroxy-3-methylbutanoate (2,3-dihydroxyisovalerate) into 2-oxo-3-methylbutanoate (2-oxoisovalerate), the penultimate precursor to L-isoleucine and L-valine, respectively. The protein is Dihydroxy-acid dehydratase 3 of Nocardia farcinica (strain IFM 10152).